The chain runs to 506 residues: RNA-splicing ligase RtcB homolog (506 aa).

5 residues coordinate Mn(2+): Asp120, Cys123, His228, His260, and His354. Residue 227 to 231 coordinates GMP; it reads NHYAE. Residues 354-355, 403-406, Ser410, 429-432, and Lys505 contribute to the GMP site; these read HN, GGTM, and HGAG. The active-site GMP-histidine intermediate is the His429.

The protein belongs to the RtcB family. In terms of assembly, catalytic component of the tRNA-splicing ligase complex. It depends on Mn(2+) as a cofactor.

It carries out the reaction a 3'-end 3'-phospho-ribonucleotide-RNA + a 5'-end dephospho-ribonucleoside-RNA + GTP = a ribonucleotidyl-ribonucleotide-RNA + GMP + diphosphate. The enzyme catalyses a 3'-end 2',3'-cyclophospho-ribonucleotide-RNA + a 5'-end dephospho-ribonucleoside-RNA + GTP + H2O = a ribonucleotidyl-ribonucleotide-RNA + GMP + diphosphate + H(+). Catalytic subunit of the tRNA-splicing ligase complex that acts by directly joining spliced tRNA halves to mature-sized tRNAs by incorporating the precursor-derived splice junction phosphate into the mature tRNA as a canonical 3',5'-phosphodiester. May act as an RNA ligase with broad substrate specificity, and may function toward other RNAs. The sequence is that of RNA-splicing ligase RtcB homolog from Plasmodium falciparum (isolate 3D7).